Reading from the N-terminus, the 297-residue chain is Tyrosine recombinase XerC (297 aa).

In terms of domain architecture, Core-binding (CB) spans 1–84; the sequence is MEEIQVTFLN…TLRTFYEFWM (84 aa). The 182-residue stretch at 105–286 folds into the Tyr recombinase domain; the sequence is YLPQFFYEEE…SNQQLRKVYL (182 aa). Residues R145, K169, H238, R241, and H264 contribute to the active site. Y273 serves as the catalytic O-(3'-phospho-DNA)-tyrosine intermediate.

Belongs to the 'phage' integrase family. XerC subfamily. As to quaternary structure, forms a cyclic heterotetrameric complex composed of two molecules of XerC and two molecules of XerD.

Its subcellular location is the cytoplasm. In terms of biological role, site-specific tyrosine recombinase, which acts by catalyzing the cutting and rejoining of the recombining DNA molecules. The XerC-XerD complex is essential to convert dimers of the bacterial chromosome into monomers to permit their segregation at cell division. It also contributes to the segregational stability of plasmids. The chain is Tyrosine recombinase XerC from Staphylococcus haemolyticus (strain JCSC1435).